The chain runs to 590 residues: V-type ATP synthase alpha chain (590 aa).

231–238 contacts ATP; the sequence is GPFGSGKT.

The protein belongs to the ATPase alpha/beta chains family.

It catalyses the reaction ATP + H2O + 4 H(+)(in) = ADP + phosphate + 5 H(+)(out). Its function is as follows. Produces ATP from ADP in the presence of a proton gradient across the membrane. The V-type alpha chain is a catalytic subunit. The chain is V-type ATP synthase alpha chain from Clostridium botulinum (strain ATCC 19397 / Type A).